Consider the following 228-residue polypeptide: Ribulose-phosphate 3-epimerase (228 aa).

Ser12 contributes to the substrate binding site. A divalent metal cation is bound by residues His37, Asp39, and His70. The active-site Proton acceptor is Asp39. Substrate contacts are provided by residues His70, 146 to 149 (GFGG), 176 to 178 (DGG), and 198 to 199 (GS). Residue Asp176 coordinates a divalent metal cation. Asp176 (proton donor) is an active-site residue.

Belongs to the ribulose-phosphate 3-epimerase family. Requires a divalent metal cation as cofactor.

It carries out the reaction D-ribulose 5-phosphate = D-xylulose 5-phosphate. It functions in the pathway carbohydrate degradation. Catalyzes the reversible epimerization of D-ribulose 5-phosphate to D-xylulose 5-phosphate. In Rhodobacter capsulatus (Rhodopseudomonas capsulata), this protein is Ribulose-phosphate 3-epimerase.